Consider the following 445-residue polypeptide: Probable glycine dehydrogenase (decarboxylating) subunit 1 (445 aa).

The protein belongs to the GcvP family. N-terminal subunit subfamily. The glycine cleavage system is composed of four proteins: P, T, L and H. In this organism, the P 'protein' is a heterodimer of two subunits.

The enzyme catalyses N(6)-[(R)-lipoyl]-L-lysyl-[glycine-cleavage complex H protein] + glycine + H(+) = N(6)-[(R)-S(8)-aminomethyldihydrolipoyl]-L-lysyl-[glycine-cleavage complex H protein] + CO2. Functionally, the glycine cleavage system catalyzes the degradation of glycine. The P protein binds the alpha-amino group of glycine through its pyridoxal phosphate cofactor; CO(2) is released and the remaining methylamine moiety is then transferred to the lipoamide cofactor of the H protein. This chain is Probable glycine dehydrogenase (decarboxylating) subunit 1, found in Anaeromyxobacter dehalogenans (strain 2CP-C).